A 779-amino-acid polypeptide reads, in one-letter code: Beta-galactosidase 15 (779 aa).

Positions 1–19 (MVSLSFILCCVLVSSCAYA) are cleaved as a signal peptide. Asn148 carries N-linked (GlcNAc...) asparagine glycosylation. Glu178 serves as the catalytic Proton donor. Glu247 serves as the catalytic Nucleophile. Asn248, Asn345, Asn374, Asn489, Asn495, and Asn555 each carry an N-linked (GlcNAc...) asparagine glycan. One can recognise an SUEL-type lectin domain in the interval 694–779 (VYEKNVLELS…AKRLAVEAIC (86 aa)).

The protein belongs to the glycosyl hydrolase 35 family. As to expression, ubiquitous, with higher levels in roots and siliques.

The protein localises to the secreted. It localises to the extracellular space. The protein resides in the apoplast. The catalysed reaction is Hydrolysis of terminal non-reducing beta-D-galactose residues in beta-D-galactosides.. The polypeptide is Beta-galactosidase 15 (BGAL15) (Arabidopsis thaliana (Mouse-ear cress)).